The chain runs to 1127 residues: E3 ubiquitin-protein ligase TRIM33 (1127 aa).

Residues 1–18 (MAENKGGGEAESGGGGSG) are compositionally biased toward gly residues. The tract at residues 1–118 (MAENKGGGEA…PSAGPPPGPP (118 aa)) is disordered. Residues 1-147 (MAENKGGGEA…AEPKLLPCLH (147 aa)) are necessary for E3 ubiquitin-protein ligase activity and repression of SMAD4 signaling and transcriptional repression. Residues 19-37 (SAPVTAGAAGPAAQEAEPP) show a composition bias toward low complexity. Over residues 52-64 (RAGAEGGAAGPDD) the composition is skewed to gly residues. Residues 65-97 (GGVAAASSGSAQAASSPAASVGTGVAGGAVSTP) show a composition bias toward low complexity. The segment covering 98-118 (APAPASAPAPGPSAGPPPGPP) has biased composition (pro residues). The segment at 125-154 (CAVCQQSLQSRREAEPKLLPCLHSFCLRCL) adopts an RING-type zinc-finger fold. 2 B box-type zinc fingers span residues 212-259 (KSEQ…IRKK) and 271-312 (QRPV…YQFL). 8 residues coordinate Zn(2+): Cys-217, Cys-220, Cys-241, His-245, Cys-276, His-279, Cys-299, and His-304. The necessary for oligomerization stretch occupies residues 299–401 (CQLLEHKEHR…QMKLLQQQND (103 aa)). Residues 299–401 (CQLLEHKEHR…QMKLLQQQND (103 aa)) adopt a coiled-coil conformation. Glycyl lysine isopeptide (Lys-Gly) (interchain with G-Cter in SUMO2) cross-links involve residues Lys-329, Lys-334, Lys-481, and Lys-504. Arg-515 is subject to Asymmetric dimethylarginine; alternate. Arg-515 is modified (omega-N-methylarginine; alternate). Lys-527 is covalently cross-linked (Glycyl lysine isopeptide (Lys-Gly) (interchain with G-Cter in SUMO2)). The residue at position 535 (Arg-535) is an Omega-N-methylarginine. The disordered stretch occupies residues 536-563 (MQQPPAPVPTTTTTTQQHPRQAAPQMLQ). Asymmetric dimethylarginine is present on Arg-577. Residue Arg-591 is modified to Asymmetric dimethylarginine; alternate. Arg-591 is subject to Omega-N-methylarginine; alternate. 2 positions are modified to asymmetric dimethylarginine: Arg-598 and Arg-604. Disordered stretches follow at residues 608-629 (PQYSMMQPHLQRQHSNPGHAGP), 673-692 (NPENLPSLPDIPPIQLEDAG), and 703-818 (YISG…TPPL). Residues 723–759 (PSALSPGSSGLSNSHTPVRPPSTSSTGSRGSCGSSGR) are compositionally biased toward low complexity. Lys-763 and Lys-769 each carry N6-acetyllysine; alternate. Residues Lys-763 and Lys-769 each participate in a glycyl lysine isopeptide (Lys-Gly) (interchain with G-Cter in SUMO2); alternate cross-link. A Glycyl lysine isopeptide (Lys-Gly) (interchain with G-Cter in SUMO2) cross-link involves residue Lys-774. Glycyl lysine isopeptide (Lys-Gly) (interchain with G-Cter in SUMO2); alternate cross-links involve residues Lys-776 and Lys-793. Residues Lys-776 and Lys-793 each participate in a glycyl lysine isopeptide (Lys-Gly) (interchain with G-Cter in SUMO1); alternate cross-link. Lys-793 bears the N6-acetyllysine; alternate mark. Residues 793–802 (KQEKTEDGRR) are compositionally biased toward basic and acidic residues. Lys-796 participates in a covalent cross-link: Glycyl lysine isopeptide (Lys-Gly) (interchain with G-Cter in SUMO2). At Ser-803 the chain carries Phosphoserine. The span at 807–818 (LSSPESSLTPPL) shows a compositional bias: low complexity. A Phosphothreonine modification is found at Thr-815. Lys-861 participates in a covalent cross-link: Glycyl lysine isopeptide (Lys-Gly) (interchain with G-Cter in SUMO2). Ser-862 is modified (phosphoserine). The PHD-type zinc finger occupies 887–934 (EDWCAVCQNGGDLLCCEKCPKVFHLTCHVPTLLSFPSGDWICTFCRDI). Lys-951 is modified (N6-acetyllysine). Position 953 is an N6-acetyllysine; alternate (Lys-953). Residue Lys-953 forms a Glycyl lysine isopeptide (Lys-Gly) (interchain with G-Cter in SUMO2); alternate linkage. The region spanning 957–1080 (GLSPVDQRKC…LYFEDKLTEI (124 aa)) is the Bromo domain. Glycyl lysine isopeptide (Lys-Gly) (interchain with G-Cter in SUMO2) cross-links involve residues Lys-1007 and Lys-1043. At Thr-1051 the chain carries Phosphothreonine. Lys-1057 participates in a covalent cross-link: Glycyl lysine isopeptide (Lys-Gly) (interchain with G-Cter in SUMO2). A disordered region spans residues 1088–1127 (PLPEFEQEEDDGEVTEDSDEDFIQPRRKRLKSDERPVHIK). Positions 1092-1109 (FEQEEDDGEVTEDSDEDF) are enriched in acidic residues. Thr-1102 carries the phosphothreonine modification. A Phosphoserine modification is found at Ser-1105. Lys-1118 participates in a covalent cross-link: Glycyl lysine isopeptide (Lys-Gly) (interchain with G-Cter in SUMO2). Over residues 1118-1127 (KSDERPVHIK) the composition is skewed to basic and acidic residues. Ser-1119 carries the post-translational modification Phosphoserine.

It belongs to the TRIM/RBCC family. In terms of assembly, homooligomer and heterooligomer with TRIM24 and TRIM28 family members. Interacts with SMAD4 in unstimulated cells. Found in a complex with SMAD2 and SMAD3 upon addition of TGF-beta. Interacts with SMAD2 and SMAD3. Interacts with SMAD4 under basal and induced conditions and, upon TGF-beta signaling, with activated SMAD2. Forms a ternary complex with SMAD4 and SMAD2 upon TGF-beta signaling. In terms of processing, sumoylated with SUMO1. Expressed in stem cells at the bottom of the crypts of the colon (at protein level). Expressed in colon adenomas and adenocarcinomas (at protein level). Expressed in brain, lung, liver, spleen, thymus, prostate, kidney, testis, heart, placenta, pancreas, small intestine, ovary, colon, skeletal muscle and hematopoietic progenitors.

The protein resides in the nucleus. The catalysed reaction is S-ubiquitinyl-[E2 ubiquitin-conjugating enzyme]-L-cysteine + [acceptor protein]-L-lysine = [E2 ubiquitin-conjugating enzyme]-L-cysteine + N(6)-ubiquitinyl-[acceptor protein]-L-lysine.. Its pathway is protein modification; protein ubiquitination. Its function is as follows. Acts as an E3 ubiquitin-protein ligase. Promotes SMAD4 ubiquitination, nuclear exclusion and degradation via the ubiquitin proteasome pathway. According to PubMed:16751102, does not promote a decrease in the level of endogenous SMAD4. May act as a transcriptional repressor. Inhibits the transcriptional response to TGF-beta/BMP signaling cascade. Plays a role in the control of cell proliferation. Its association with SMAD2 and SMAD3 stimulates erythroid differentiation of hematopoietic stem/progenitor. Monoubiquitinates SMAD4 and acts as an inhibitor of SMAD4-dependent TGF-beta/BMP signaling cascade (Monoubiquitination of SMAD4 hampers its ability to form a stable complex with activated SMAD2/3 resulting in inhibition of TGF-beta/BMP signaling cascade). In Homo sapiens (Human), this protein is E3 ubiquitin-protein ligase TRIM33 (TRIM33).